Consider the following 270-residue polypeptide: MANLDVIVDRSDPAVQRIVDVTKHSRSVVRTVLIEDIEPLTQSIRAGVEFTEVYGLDTVPFPGDLLAACEKRGIRVRLLSAAVANQVFKTEKKPKVFGIAKVPPAGRFADLESLSGDVVLLDGVKIVGNIGAIVRTRSALGAAGIVLVDSGLGTIADRRLIRASRGYVFSLPIVLATRDEALAFFRDGGMRPVVFEADGKLSIGELDGIDERLVLVFGSEKTGPSGEFAGVATESVSIPMNPAAESLNVSVSAGIALHRRARRNLSRPRG.

S-adenosyl-L-methionine is bound by residues Arg135, Arg165, Gly218, Ile238, and Leu247.

This sequence belongs to the class IV-like SAM-binding methyltransferase superfamily. RNA methyltransferase TsnR/AvirB family.

The catalysed reaction is adenosine(1067) in 23S rRNA + S-adenosyl-L-methionine = 2'-O-methyladenosine(1067) in 23S rRNA + S-adenosyl-L-homocysteine + H(+). Functionally, specifically methylates the adenosine-1067 in 23S ribosomal RNA. Confers resistance to antibiotic thiostrepton. The sequence is that of 23S rRNA (adenosine(1067)-2'-O)-methyltransferase from Streptomyces laurentii.